The primary structure comprises 1067 residues: Hemoglobin and hemoglobin-haptoglobin-binding protein B (1067 aa).

The signal sequence occupies residues 1–24 (MTNFKFSLLACSIAFALNASTAYA). Tandem repeats lie at residues 26–29 (QPTN), 30–33 (QPTN), 34–37 (QPTN), 38–41 (QPTN), 42–45 (QPTN), and 46–49 (QPTN). Residues 26-49 (QPTNQPTNQPTNQPTNQPTNQPTN) form a 6 X 4 AA tandem repeats of Q-P-T-N region. Positions 26–51 (QPTNQPTNQPTNQPTNQPTNQPTNQN) are enriched in low complexity. The disordered stretch occupies residues 26 to 53 (QPTNQPTNQPTNQPTNQPTNQPTNQNSN). The TonB box motif lies at 59–66 (EQINVSGS). The 126-residue stretch at 71 to 196 (NIKEKKVGET…LGGSVIFETK (126 aa)) folds into the TBDR plug domain. The TBDR beta-barrel domain occupies 204–1067 (DKDYYLSYKR…NYRMSVQFEF (864 aa)). The TonB C-terminal box motif lies at 1050-1067 (NRFYAPGRNYRMSVQFEF).

The protein belongs to the TonB-dependent receptor family. Hemoglobin/haptoglobin binding protein subfamily.

It localises to the cell outer membrane. Functionally, acts as a receptor for hemoglobin or the hemoglobin/haptoglobin complex of the human host and is required for heme uptake. In Haemophilus influenzae, this protein is Hemoglobin and hemoglobin-haptoglobin-binding protein B (hgbB).